Here is a 345-residue protein sequence, read N- to C-terminus: Ninja-family protein AFP1 (345 aa).

2 disordered regions span residues 114-185 (TSLP…ATAN) and 201-256 (QVSG…RRLS). 2 stretches are compositionally biased toward basic and acidic residues: residues 123–132 (EWRKRKEMQT) and 222–232 (LETKASSDEAR). A compositionally biased stretch (low complexity) spans 235–249 (PSTTQPQQETTTKPT).

This sequence belongs to the Ninja family. Forms a heterodimer with AFP2. Interacts with ABI5/DPBF1, DPBF2, AREB3/DPBF3, ABF1, ABF3/DPBF5 and ABF4/AREB2.

It is found in the nucleus. Functionally, acts as a negative regulator of abscisic acid (ABA) response during germination through the ubiquitin-mediated proteolysis of ABI5/DPBF1. The sequence is that of Ninja-family protein AFP1 (AFP1) from Arabidopsis thaliana (Mouse-ear cress).